Consider the following 152-residue polypeptide: MAGKHTQLEELIAPVVESLECELWGLEYSVQGRRSMLRIFIDKQPDGVLVEDCEKVSRQVSSVLDVEDPISGEYTLEVSSPGMDRPLFKLAHFELYVGHRVALRLRVAFEGRRKFQGLLKGIEDGEIVLEVGEEEYLLPFELIDKANVVPQF.

The protein belongs to the RimP family.

It is found in the cytoplasm. Functionally, required for maturation of 30S ribosomal subunits. The polypeptide is Ribosome maturation factor RimP (Teredinibacter turnerae (strain ATCC 39867 / T7901)).